We begin with the raw amino-acid sequence, 568 residues long: Sphingosine-1-phosphate lyase 1 (568 aa).

The Lumenal segment spans residues 1 to 41 (MPSTDLLTLKAFEPYLEILEVYSTKAKNYVNGHCTKYEPWQ). Residues 42-62 (LIAWSVVWTLLIVWGYEFVFQ) form a helical; Signal-anchor for type III membrane protein membrane-spanning segment. Topologically, residues 63 to 568 (PESLWSRFKK…SQMNGSPKPH (506 aa)) are cytoplasmic. Lys-353 is subject to N6-(pyridoxal phosphate)lysine; alternate. N6-acetyllysine; alternate is present on Lys-353. A 3'-nitrotyrosine mark is found at Tyr-356 and Tyr-366. The residue at position 564 (Ser-564) is a Phosphoserine.

Belongs to the group II decarboxylase family. Sphingosine-1-phosphate lyase subfamily. Homodimer. The cofactor is pyridoxal 5'-phosphate.

It localises to the endoplasmic reticulum membrane. The enzyme catalyses sphinganine 1-phosphate = hexadecanal + phosphoethanolamine. The catalysed reaction is sphing-4-enine 1-phosphate = (2E)-hexadecenal + phosphoethanolamine. It participates in lipid metabolism; sphingolipid metabolism. Functionally, cleaves phosphorylated sphingoid bases (PSBs), such as sphingosine-1-phosphate, into fatty aldehydes and phosphoethanolamine. Elevates stress-induced ceramide production and apoptosis. Required for global lipid homeostasis in liver and cholesterol homeostasis in fibroblasts. Involved in the regulation of pro-inflammatory response and neutrophil trafficking. Modulates neuronal autophagy via phosphoethanolamine production which regulates accumulation of aggregate-prone proteins such as APP. Seems to play a role in establishing neuronal contact sites and axonal maintenance. The protein is Sphingosine-1-phosphate lyase 1 of Pongo abelii (Sumatran orangutan).